The following is a 616-amino-acid chain: MMEGSRQTRVSRPYKISESSKVYRWAEHSGTVLQRLNEQRLRGLFCDVVLVADEQRLPAHRNLLAVCSDYFNSMFTLGMREAFQKEVELIGASYIGLKAVVDFLYGGELVLDGGNIDYVLETAHLLQIWTAVDFCCEYLEQEVSEDNYLYLQELASIYSLKRLDAFIDSFILSRFGTLSFTPAFLQNISMQKLCAYLGSSEVQRECEHDLLQAALQWLTQQPEREAHAYQVLENIHFPLIPKNDLLHRVKPAVCSLLPREANCEGFIEEAVRYHNSLAAQPVMQTKRTALRTTQECLLFVGGEVSERCLELSDDTCYLDAQSEQWVKETPLPARRSHHCVAVLGGFIFIAGGSFSRDNGGDAASNLLYRYDPRCKQWIKVASMNQRRVDFYLASIEDMLVAVGGRNENGALSSVETYSPKTDSWSYVAGLPRFTYGHAGTIYKDFVYISGGHDYQIGPYRKNLLCYDHRTDVWEERRPMSTARGWHSMCSLGDSIYSIGGSDDSLESMERFDVLGVEAYSPQCNQWTRVAPLLHANSESGVAVWEGRIYILGGYSWENTAFSKTVQVYDRDKDKWSEGTELPKAIAGVSACVCALKPRLEDKKKKGKGKRPQDHGQ.

The BTB domain occupies 46–113 (CDVVLVADEQ…LYGGELVLDG (68 aa)). A BACK domain is found at 148-250 (YLYLQELASI…PKNDLLHRVK (103 aa)). 6 Kelch repeats span residues 296–345 (CLLF…VLGG), 346–397 (FIFI…SIED), 398–444 (MLVA…IYKD), 446–493 (VYIS…SLGD), 494–546 (SIYS…VWEG), and 547–595 (RIYI…VCAL).

In terms of assembly, interacts with CUL3.

It functions in the pathway protein modification; protein ubiquitination. Probable substrate-specific adapter of an E3 ubiquitin-protein ligase complex which mediates the ubiquitination and subsequent proteasomal degradation of target proteins. The chain is Kelch-like protein 36 (KLHL36) from Bos taurus (Bovine).